The chain runs to 274 residues: Thiamine kinase (274 aa).

The protein belongs to the thiamine kinase family.

It carries out the reaction thiamine + ATP = thiamine phosphate + ADP + H(+). It functions in the pathway cofactor biosynthesis; thiamine diphosphate biosynthesis; thiamine phosphate from thiamine: step 1/1. In terms of biological role, catalyzes the ATP-dependent phosphorylation of thiamine to thiamine phosphate. Is involved in thiamine salvage. This chain is Thiamine kinase, found in Escherichia coli O139:H28 (strain E24377A / ETEC).